The following is a 192-amino-acid chain: Imidazoleglycerol-phosphate dehydratase (192 aa).

It belongs to the imidazoleglycerol-phosphate dehydratase family.

Its subcellular location is the cytoplasm. It catalyses the reaction D-erythro-1-(imidazol-4-yl)glycerol 3-phosphate = 3-(imidazol-4-yl)-2-oxopropyl phosphate + H2O. The protein operates within amino-acid biosynthesis; L-histidine biosynthesis; L-histidine from 5-phospho-alpha-D-ribose 1-diphosphate: step 6/9. The protein is Imidazoleglycerol-phosphate dehydratase of Clostridioides difficile (strain 630) (Peptoclostridium difficile).